Reading from the N-terminus, the 360-residue chain is Aminomethyltransferase (360 aa).

This sequence belongs to the GcvT family. As to quaternary structure, the glycine cleavage system is composed of four proteins: P, T, L and H.

It catalyses the reaction N(6)-[(R)-S(8)-aminomethyldihydrolipoyl]-L-lysyl-[protein] + (6S)-5,6,7,8-tetrahydrofolate = N(6)-[(R)-dihydrolipoyl]-L-lysyl-[protein] + (6R)-5,10-methylene-5,6,7,8-tetrahydrofolate + NH4(+). Functionally, the glycine cleavage system catalyzes the degradation of glycine. In Legionella pneumophila subsp. pneumophila (strain Philadelphia 1 / ATCC 33152 / DSM 7513), this protein is Aminomethyltransferase.